The primary structure comprises 754 residues: uncharacterized protein (754 aa).

Active-site charge relay system residues include serine 585 and histidine 707. A disordered region spans residues 733 to 754 (SHAPPPSRKARSAARRSTDPVR).

Belongs to the peptidase S9A family.

This is an uncharacterized protein from Sinorhizobium fredii (strain NBRC 101917 / NGR234).